A 465-amino-acid chain; its full sequence is Glutamate--tRNA ligase (465 aa).

A 'HIGH' region motif is present at residues 8–18 (PSPTGYLHIGG). The 'KMSKS' region motif lies at 236 to 240 (RLSKR). Lys-239 contributes to the ATP binding site.

It belongs to the class-I aminoacyl-tRNA synthetase family. Glutamate--tRNA ligase type 1 subfamily. Monomer.

Its subcellular location is the cytoplasm. It carries out the reaction tRNA(Glu) + L-glutamate + ATP = L-glutamyl-tRNA(Glu) + AMP + diphosphate. Functionally, catalyzes the attachment of glutamate to tRNA(Glu) in a two-step reaction: glutamate is first activated by ATP to form Glu-AMP and then transferred to the acceptor end of tRNA(Glu). The polypeptide is Glutamate--tRNA ligase (Nitrosospira multiformis (strain ATCC 25196 / NCIMB 11849 / C 71)).